Consider the following 41-residue polypeptide: Hadrurin (41 aa).

This sequence belongs to the non-disulfide-bridged peptide (NDBP) superfamily. Long chain multifunctional peptide (group 2) family. Expressed by the venom gland.

The protein localises to the secreted. Antimicrobial activity against S.typhimurium, K.pneumoniae, E.cloacae, P.aeruginosa, E.coli and S.marcescens. Also shows hemolytic activity when tested in human erythrocytes. The sequence is that of Hadrurin from Hoffmannihadrurus aztecus (Mexican scorpion).